The following is a 799-amino-acid chain: Homeobox protein engrailed (799 aa).

Disordered stretches follow at residues 189–331 (LPSR…DATK), 369–444 (GNFL…SLRQ), 554–664 (HPFL…DKAK), and 678–705 (SDRPSSGPRSRKPKRSKAQDEKRPRTAF). A compositionally biased stretch (polar residues) spans 210-222 (QSPSTSIRSNLVS). Composition is skewed to basic and acidic residues over residues 228–239 (SRRDDQETSDSC) and 246–256 (RAINDSERYDV). Composition is skewed to polar residues over residues 284–299 (LNLTTTGGDSVSQLFH) and 377–401 (HTFQPNEDHQTVSSAQTTPRFSSPD). Over residues 416–431 (ESLSSPSSSSSSSRSS) the composition is skewed to low complexity. Composition is skewed to basic and acidic residues over residues 608-619 (DQKKRSRDESAS) and 629-648 (VHLKENSQKSDPVLKQEKGN). A DNA-binding region (homeobox) is located at residues 698–757 (EKRPRTAFTNDQLQRLKREFDECRYLTETRRKNLADELGLTESQIKIWFQNKRAKIKKSV).

Belongs to the engrailed homeobox family. Expressed in the dorsal ectoderm of early gastrulae in a band corresponding to the peripheral area of the presumptive shell gland. Also expressed at four points along the posterior ectoderm. In late gastrulae, it is predominantly expressed in the peripheral ectoderm of the shell gland and in spots at the posterior end behind the presumptive foot. Expressed in late trochophore larvae at four points behind the foot, at two locations at the base of the foot and in the peripheral ectoderm of the shell gland.

It is found in the nucleus. May be involved in shell and shell gland formation during development. This Lymnaea stagnalis (Great pond snail) protein is Homeobox protein engrailed.